A 73-amino-acid polypeptide reads, in one-letter code: UPF0435 protein lwe1727 (73 aa).

It belongs to the UPF0435 family.

This is UPF0435 protein lwe1727 from Listeria welshimeri serovar 6b (strain ATCC 35897 / DSM 20650 / CCUG 15529 / CIP 8149 / NCTC 11857 / SLCC 5334 / V8).